The following is a 351-amino-acid chain: L-threonine 3-dehydrogenase (351 aa).

C39 lines the Zn(2+) pocket. Active-site charge relay system residues include T41 and H44. Positions 64, 65, 94, 97, 100, and 108 each coordinate Zn(2+). Residues I176, D196, R201, 271–273, and 295–296 contribute to the NAD(+) site; these read LGI and IY.

The protein belongs to the zinc-containing alcohol dehydrogenase family. In terms of assembly, homotetramer. The cofactor is Zn(2+).

The protein resides in the cytoplasm. It carries out the reaction L-threonine + NAD(+) = (2S)-2-amino-3-oxobutanoate + NADH + H(+). The protein operates within amino-acid degradation; L-threonine degradation via oxydo-reductase pathway; glycine from L-threonine: step 1/2. Catalyzes the NAD(+)-dependent oxidation of L-threonine to 2-amino-3-ketobutyrate. The protein is L-threonine 3-dehydrogenase of Francisella philomiragia subsp. philomiragia (strain ATCC 25017 / CCUG 19701 / FSC 153 / O#319-036).